A 358-amino-acid chain; its full sequence is Isopentenyl-diphosphate delta-isomerase (358 aa).

Position 12 to 13 (12 to 13 (RK)) interacts with substrate. FMN-binding positions include 69–71 (AMT), Ser99, and Asn128. Gln158 is a binding site for substrate. Glu159 provides a ligand contact to Mg(2+). FMN is bound by residues Lys190, Thr220, 267-269 (GIR), and 288-289 (AG).

This sequence belongs to the IPP isomerase type 2 family. As to quaternary structure, homooctamer. Dimer of tetramers. The cofactor is FMN. NADPH serves as cofactor. Requires Mg(2+) as cofactor.

Its subcellular location is the cytoplasm. The catalysed reaction is isopentenyl diphosphate = dimethylallyl diphosphate. Its function is as follows. Involved in the biosynthesis of isoprenoids. Catalyzes the 1,3-allylic rearrangement of the homoallylic substrate isopentenyl (IPP) to its allylic isomer, dimethylallyl diphosphate (DMAPP). This Listeria monocytogenes serotype 4b (strain F2365) protein is Isopentenyl-diphosphate delta-isomerase.